Here is a 219-residue protein sequence, read N- to C-terminus: Segregation and condensation protein B (219 aa).

Residues 193–219 (SLFAGGEEPSAEAADGGAGESTHGEEE) form a disordered region. Over residues 196 to 207 (AGGEEPSAEAAD) the composition is skewed to low complexity.

The protein belongs to the ScpB family. Homodimer. Homodimerization may be required to stabilize the binding of ScpA to the Smc head domains. Component of a cohesin-like complex composed of ScpA, ScpB and the Smc homodimer, in which ScpA and ScpB bind to the head domain of Smc. The presence of the three proteins is required for the association of the complex with DNA.

It localises to the cytoplasm. Participates in chromosomal partition during cell division. May act via the formation of a condensin-like complex containing Smc and ScpA that pull DNA away from mid-cell into both cell halves. This Symbiobacterium thermophilum (strain DSM 24528 / JCM 14929 / IAM 14863 / T) protein is Segregation and condensation protein B.